A 350-amino-acid chain; its full sequence is Bifunctional methylenetetrahydrofolate dehydrogenase/cyclohydrolase, mitochondrial (350 aa).

Residues 1–35 constitute a mitochondrion transit peptide; that stretch reads MAATSLMSALAARLLQPAHSCSLRLRPFHLAAVRN. N6-acetyllysine; alternate is present on Lys-50. Lys-50 participates in a covalent cross-link: Glycyl lysine isopeptide (Lys-Gly) (interchain with G-Cter in SUMO2); alternate. Substrate contacts are provided by residues 84–88 and 131–133; these read YVLNK and VQL. NAD(+) is bound by residues 200-202 and Arg-233; that span reads GRS. A substrate-binding site is contributed by 309–313; sequence PGGVG.

Belongs to the tetrahydrofolate dehydrogenase/cyclohydrolase family. Homodimer. Requires Mg(2+) as cofactor.

It is found in the mitochondrion. It carries out the reaction (6R)-5,10-methylene-5,6,7,8-tetrahydrofolate + NAD(+) = (6R)-5,10-methenyltetrahydrofolate + NADH. The enzyme catalyses (6R)-5,10-methenyltetrahydrofolate + H2O = (6R)-10-formyltetrahydrofolate + H(+). Its function is as follows. Although its dehydrogenase activity is NAD-specific, it can also utilize NADP at a reduced efficiency. The polypeptide is Bifunctional methylenetetrahydrofolate dehydrogenase/cyclohydrolase, mitochondrial (MTHFD2) (Homo sapiens (Human)).